A 338-amino-acid polypeptide reads, in one-letter code: NLP effector protein 6 (338 aa).

Positions 1-19 (MRFTTIFWISLTVLATVRA) are cleaved as a signal peptide. Residues 68–119 (LTLSPSASSPAKRNVTLPPDTTMRPDPRQTEPPTEAPTPASTPAPTPDPGPW) are disordered. Asn-81 is a glycosylation site (N-linked (GlcNAc...) asparagine). Pro residues predominate over residues 101-117 (TEAPTPASTPAPTPDPG). A Conserved undecapeptide motif I motif is present at residues 205–215 (AIMYSWYFPKD). The short motif at 222–227 (GHRHDW) is the Hepta-peptide GHRHDWE motif II element.

Belongs to the Necrosis inducing protein (NPP1) family.

It is found in the secreted. Secreted effector that contributes strongly to virulence during infection by P.capsici. Causes large necrotic areas in both host C.annuum and non-host N.benthamiana. This Phytophthora capsici protein is NLP effector protein 6.